The sequence spans 425 residues: UPF0229 protein SG1344 (425 aa).

Residues 49–109 (GESVSIPNTD…GQGSVSQDGE (61 aa)) form a disordered region. A compositionally biased stretch (polar residues) spans 50 to 59 (ESVSIPNTDI). Positions 77-90 (PGNDHFVQNDRIER) are enriched in basic and acidic residues.

Belongs to the UPF0229 family.

This chain is UPF0229 protein SG1344, found in Sodalis glossinidius (strain morsitans).